The following is a 64-amino-acid chain: uncharacterized protein (64 aa).

This is an uncharacterized protein from Escherichia coli (strain K12).